The primary structure comprises 192 residues: Late embryogenesis abundant protein 47 (192 aa).

The Nuclear localization signal (NLS) motif lies at 5-9 (QLQKP). SMP domains lie at 68–125 (ITIG…LNAR) and 133–190 (TTLA…RINQ). The tract at residues 146–174 (LPSDKAATRKDAEGVTGAEMRNDPHLTTY) is disordered. Basic and acidic residues predominate over residues 147 to 158 (PSDKAATRKDAE).

The protein belongs to the LEA type SMP family.

It localises to the cytoplasm. The protein resides in the nucleus. Its function is as follows. LEA proteins are late embryonic proteins abundant in higher plant seed embryos. The function of those proteins is not known. The polypeptide is Late embryogenesis abundant protein 47 (Arabidopsis thaliana (Mouse-ear cress)).